A 440-amino-acid polypeptide reads, in one-letter code: Ribulose bisphosphate carboxylase large chain (440 aa).

Lys4 carries the N6,N6,N6-trimethyllysine modification. Residues Asn113 and Thr163 each coordinate substrate. The Proton acceptor role is filled by Lys165. Lys167 provides a ligand contact to substrate. Mg(2+) contacts are provided by Lys191, Asp193, and Glu194. Lys191 is subject to N6-carboxylysine. His284 (proton acceptor) is an active-site residue. Substrate-binding residues include Arg285, His317, and Ser369.

It belongs to the RuBisCO large chain family. Type I subfamily. Heterohexadecamer of 8 large chains and 8 small chains; disulfide-linked. The disulfide link is formed within the large subunit homodimers. Mg(2+) serves as cofactor. Post-translationally, the disulfide bond which can form in the large chain dimeric partners within the hexadecamer appears to be associated with oxidative stress and protein turnover.

Its subcellular location is the plastid. It localises to the chloroplast. It catalyses the reaction 2 (2R)-3-phosphoglycerate + 2 H(+) = D-ribulose 1,5-bisphosphate + CO2 + H2O. The enzyme catalyses D-ribulose 1,5-bisphosphate + O2 = 2-phosphoglycolate + (2R)-3-phosphoglycerate + 2 H(+). Functionally, ruBisCO catalyzes two reactions: the carboxylation of D-ribulose 1,5-bisphosphate, the primary event in carbon dioxide fixation, as well as the oxidative fragmentation of the pentose substrate in the photorespiration process. Both reactions occur simultaneously and in competition at the same active site. This chain is Ribulose bisphosphate carboxylase large chain, found in Polystichum munitum (Western sword-fern).